Reading from the N-terminus, the 221-residue chain is Type 3 secretion system stator protein (221 aa).

The protein belongs to the SctL stator family. As to quaternary structure, the core secretion machinery of the T3SS is composed of approximately 20 different proteins, including cytoplasmic components, a base, an export apparatus and a needle. This subunit is part of the cytosolic complex. Interacts directly with YscN/SctN (T3SS ATPase) and YscQ/SctQ (the major sorting platform component).

The protein resides in the cytoplasm. In terms of biological role, component of the type III secretion system (T3SS), also called injectisome, which is used to inject bacterial effector proteins into eukaryotic host cells. Acts as a regulator of the YscN/SctN ATPase activity. The sequence is that of Type 3 secretion system stator protein from Yersinia pestis.